The sequence spans 626 residues: Chaperone protein HtpG (626 aa).

An a; substrate-binding region spans residues 1-341 (MAKKEFKAES…SEDLSLNISR (341 aa)). Residues 342-552 (EMLQHDRQLK…DGEVTIEMEK (211 aa)) are b. The segment at 553 to 626 (ILNAMPDSQN…FTNNICKVMV (74 aa)) is c.

The protein belongs to the heat shock protein 90 family. Homodimer.

Its subcellular location is the cytoplasm. Its function is as follows. Molecular chaperone. Has ATPase activity. This Bacillus subtilis (strain 168) protein is Chaperone protein HtpG.